A 1265-amino-acid chain; its full sequence is DNA-directed RNA polymerase subunit beta'' (1265 aa).

Zn(2+) is bound by residues C223, C297, C304, and C307.

The protein belongs to the RNA polymerase beta' chain family. RpoC2 subfamily. In terms of assembly, in plastids the minimal PEP RNA polymerase catalytic core is composed of four subunits: alpha, beta, beta', and beta''. When a (nuclear-encoded) sigma factor is associated with the core the holoenzyme is formed, which can initiate transcription. The cofactor is Zn(2+).

The protein localises to the plastid. It localises to the cyanelle. It catalyses the reaction RNA(n) + a ribonucleoside 5'-triphosphate = RNA(n+1) + diphosphate. Functionally, DNA-dependent RNA polymerase catalyzes the transcription of DNA into RNA using the four ribonucleoside triphosphates as substrates. In Cyanophora paradoxa, this protein is DNA-directed RNA polymerase subunit beta''.